The chain runs to 348 residues: Bombesin receptor-activated protein C6orf89 homolog (348 aa).

The Cytoplasmic portion of the chain corresponds to 1–58 (MDLAANEISIYDKLSETVDLVRQTGHQCGMSEKAIEKFIRQLLEKNEPQRGPPQYPLL). A helical transmembrane segment spans residues 59–79 (IAMYKVLLTLGLILFTAYFVI). The Extracellular segment spans residues 80–348 (QPFSSLAPEP…ICDGTTLSEL (269 aa)).

Homodimer. Interacts with BRS3. Interacts (via N-terminus) with SIN3B. In terms of processing, glycosylated.

The protein resides in the golgi apparatus membrane. It is found in the cytoplasm. In terms of biological role, exhibits histone deacetylase (HDAC) enhancer properties. May play a role in cell cycle progression and wound repair of bronchial epithelial cells. This chain is Bombesin receptor-activated protein C6orf89 homolog, found in Rattus norvegicus (Rat).